We begin with the raw amino-acid sequence, 284 residues long: 2-dehydro-3-deoxyphosphooctonate aldolase (284 aa).

The protein belongs to the KdsA family.

The protein resides in the cytoplasm. The catalysed reaction is D-arabinose 5-phosphate + phosphoenolpyruvate + H2O = 3-deoxy-alpha-D-manno-2-octulosonate-8-phosphate + phosphate. Its pathway is carbohydrate biosynthesis; 3-deoxy-D-manno-octulosonate biosynthesis; 3-deoxy-D-manno-octulosonate from D-ribulose 5-phosphate: step 2/3. The protein operates within bacterial outer membrane biogenesis; lipopolysaccharide biosynthesis. This chain is 2-dehydro-3-deoxyphosphooctonate aldolase, found in Sodalis glossinidius (strain morsitans).